The chain runs to 444 residues: Signal recognition particle 54 kDa protein (444 aa).

Residues 102–109 (GVQGSGKT), 184–188 (DTAGR), and 244–247 (SKMD) contribute to the GTP site.

It belongs to the GTP-binding SRP family. SRP54 subfamily. Part of the signal recognition particle protein translocation system, which is composed of SRP and FtsY. Archaeal SRP consists of a 7S RNA molecule of 300 nucleotides and two protein subunits: SRP54 and SRP19.

Its subcellular location is the cytoplasm. It carries out the reaction GTP + H2O = GDP + phosphate + H(+). Involved in targeting and insertion of nascent membrane proteins into the cytoplasmic membrane. Binds to the hydrophobic signal sequence of the ribosome-nascent chain (RNC) as it emerges from the ribosomes. The SRP-RNC complex is then targeted to the cytoplasmic membrane where it interacts with the SRP receptor FtsY. In Sulfolobus acidocaldarius (strain ATCC 33909 / DSM 639 / JCM 8929 / NBRC 15157 / NCIMB 11770), this protein is Signal recognition particle 54 kDa protein.